A 189-amino-acid chain; its full sequence is UPF0301 protein bbp_491 (189 aa).

This sequence belongs to the UPF0301 (AlgH) family.

In Buchnera aphidicola subsp. Baizongia pistaciae (strain Bp), this protein is UPF0301 protein bbp_491.